The primary structure comprises 351 residues: MDIMNEKVKKIIEFMDKNSIDAVLIAKNPNVYYISGASPLAGGYILITGESATLYVPELEYEMAKEESNIPVEKFKKMDEFYKALEGIKSLGIESSLPYGFIEELKKKANIKEFKKVDDVIRDMRIIKSEKEIKIIEKACEIADKAVMAAIEEITEGKKEREVAAKVEYLMKMNGAEKPAFDTIIASGYRSALPHGVASDKRIERGDLVVIDLGALYQHYNSDITRTIVVGSPNEKQKEIYEIVLEAQKKAVESAKPGITAKELDSIARNIIAEYGYGEYFNHSLGHGVGLEVHEWPRVSQYDETVLREGMVITIEPGIYIPKIGGVRIEDTILITKNGSKRLTKTERELI.

D212, D223, H287, E316, and E330 together coordinate Co(2+).

This sequence belongs to the peptidase M24B family. Archaeal-type prolidase subfamily. In terms of assembly, homodimer. Co(2+) is required as a cofactor.

It localises to the cytoplasm. The enzyme catalyses Xaa-L-Pro dipeptide + H2O = an L-alpha-amino acid + L-proline. Functionally, splits dipeptides with a prolyl in the C-terminal position and a nonpolar amino acid at the N-terminal position. The sequence is that of Xaa-Pro dipeptidase (pepQ) from Pyrococcus horikoshii (strain ATCC 700860 / DSM 12428 / JCM 9974 / NBRC 100139 / OT-3).